We begin with the raw amino-acid sequence, 61 residues long: Small ribosomal subunit protein uS14 (61 aa).

Residues Cys24, Cys27, Cys40, and Cys43 each coordinate Zn(2+).

The protein belongs to the universal ribosomal protein uS14 family. Zinc-binding uS14 subfamily. Part of the 30S ribosomal subunit. Contacts proteins S3 and S10. Zn(2+) is required as a cofactor.

Functionally, binds 16S rRNA, required for the assembly of 30S particles and may also be responsible for determining the conformation of the 16S rRNA at the A site. The chain is Small ribosomal subunit protein uS14 from Aliarcobacter butzleri (strain RM4018) (Arcobacter butzleri).